A 329-amino-acid polypeptide reads, in one-letter code: L-threonine dehydratase catabolic TdcB (329 aa).

53–54 contributes to the AMP binding site; it reads RT. The residue at position 58 (Lys-58) is an N6-(pyridoxal phosphate)lysine. AMP is bound by residues Gln-88, 119 to 120, and Asn-314; that span reads DY.

Belongs to the serine/threonine dehydratase family. In the native structure, TdcB is in a dimeric form, whereas in the TdcB-AMP complex, it exists in a tetrameric form (dimer of dimers). Pyridoxal 5'-phosphate serves as cofactor.

It catalyses the reaction L-threonine = 2-oxobutanoate + NH4(+). The enzyme catalyses L-serine = pyruvate + NH4(+). It participates in amino-acid degradation; L-threonine degradation via propanoate pathway; propanoate from L-threonine: step 1/4. With respect to regulation, each protein molecule can bind up to four molecules of AMP, which act as an allosteric activator to the enzyme. Functionally, catalyzes the anaerobic formation of alpha-ketobutyrate and ammonia from threonine in a two-step reaction. The first step involved a dehydration of threonine and a production of enamine intermediates (aminocrotonate), which tautomerizes to its imine form (iminobutyrate). Both intermediates are unstable and short-lived. The second step is the nonenzymatic hydrolysis of the enamine/imine intermediates to form 2-ketobutyrate and free ammonia. In the low water environment of the cell, the second step is accelerated by RidA. TdcB also dehydrates serine to yield pyruvate via analogous enamine/imine intermediates. The sequence is that of L-threonine dehydratase catabolic TdcB (tdcB) from Escherichia coli O157:H7.